We begin with the raw amino-acid sequence, 291 residues long: Beta-lactamase CTX-M-4 (291 aa).

The signal sequence occupies residues 1-28; that stretch reads MMTQSIRRSMLTVMATLPLLFSSATLHA. The active-site Acyl-ester intermediate is the serine 73. 237 to 239 lines the substrate pocket; the sequence is KTG.

Belongs to the class-A beta-lactamase family.

The enzyme catalyses a beta-lactam + H2O = a substituted beta-amino acid. Functionally, has cefotaxime-hydrolyzing activity. The protein is Beta-lactamase CTX-M-4 (bla) of Salmonella typhimurium.